We begin with the raw amino-acid sequence, 271 residues long: ATP synthase subunit a (271 aa).

Transmembrane regions (helical) follow at residues 40 to 60, 100 to 120, 146 to 166, 220 to 240, and 242 to 262; these read TINI…LVLF, LIAP…LMDL, DVNV…FYNI, LIFI…LNVP, and AIFH…LTIV.

Belongs to the ATPase A chain family. As to quaternary structure, F-type ATPases have 2 components, CF(1) - the catalytic core - and CF(0) - the membrane proton channel. CF(1) has five subunits: alpha(3), beta(3), gamma(1), delta(1), epsilon(1). CF(0) has three main subunits: a(1), b(2) and c(9-12). The alpha and beta chains form an alternating ring which encloses part of the gamma chain. CF(1) is attached to CF(0) by a central stalk formed by the gamma and epsilon chains, while a peripheral stalk is formed by the delta and b chains.

The protein localises to the cell inner membrane. Functionally, key component of the proton channel; it plays a direct role in the translocation of protons across the membrane. This is ATP synthase subunit a from Shigella flexneri.